Reading from the N-terminus, the 152-residue chain is MDQSQKEVWDDSELRNAFETALHEFKKYHSIEAKGGVSDPDSRLDGEKLISAARTEESISKLEEGEQMINQQTETTLEGDTHIQQFADNKGLSDEKPETRAAETHQEFMEVPPPIRGLTYDETYKKLIMSWYYAGYYTGLAEGLAKSEQRKD.

An interacts with yip11/gem2 region spans residues 26 to 51 (KKYHSIEAKGGVSDPDSRLDGEKLIS). A disordered region spans residues 88 to 110 (DNKGLSDEKPETRAAETHQEFME). Residues 91–108 (GLSDEKPETRAAETHQEF) are compositionally biased toward basic and acidic residues. Positions 130-152 (SWYYAGYYTGLAEGLAKSEQRKD) are may interact with gem8.

The protein belongs to the SMN family. Homooligomer; may form homodimers and homotetramers. Part of the core SMN complex at least composed of smn1, yip11/gem2, gem6, gem7 and gem8. Part of the SMN-Sm complex. Interacts with yip11/gem2; the interaction is direct. Interacts with gem8; the interaction is direct. Interacts with proteins of the Sm complex, including smn1, smb1, smd1, smd2 and smd3.

It localises to the nucleus. The SMN complex catalyzes the assembly of small nuclear ribonucleoproteins (snRNPs), the building blocks of the spliceosome, and thereby plays an important role in the splicing of cellular pre-mRNAs. Most spliceosomal snRNPs contain a common set of Sm proteins smb1, smd1, smd2, smd3, sme1, smf1 and smg1 that assemble in a heptameric protein ring on the Sm site of the small nuclear RNA to form the core snRNP (Sm core). In the cytosol, the Sm proteins smd1, smd2, sme1, smf1 and smg1 (5Sm) are trapped in an inactive 6S pICln-Sm complex by the chaperone saf5 that controls the assembly of the core snRNP. To assemble core snRNPs, the SMN complex accepts the trapped 5Sm proteins from saf5 forming an intermediate. Binding of snRNA inside 5Sm triggers eviction of the SMN complex, thereby allowing binding of smd3 and smb1 to complete assembly of the core snRNP. Within the SMN complex, smn1 acts as a structural backbone and together with yip11/gem2 it gathers the Sm complex subunits. This chain is SMN complex subunit smn1, found in Schizosaccharomyces pombe (strain 972 / ATCC 24843) (Fission yeast).